Here is a 696-residue protein sequence, read N- to C-terminus: DNA-directed RNA polymerase subunit beta' (696 aa).

Residues Cys70, Cys72, Cys85, and Cys88 each contribute to the Zn(2+) site. Mg(2+)-binding residues include Asp540, Asp542, and Asp544.

The protein belongs to the RNA polymerase beta' chain family. RpoC1 subfamily. As to quaternary structure, in plastids the minimal PEP RNA polymerase catalytic core is composed of four subunits: alpha, beta, beta', and beta''. When a (nuclear-encoded) sigma factor is associated with the core the holoenzyme is formed, which can initiate transcription. Requires Mg(2+) as cofactor. The cofactor is Zn(2+).

The protein resides in the plastid. It localises to the chloroplast. The enzyme catalyses RNA(n) + a ribonucleoside 5'-triphosphate = RNA(n+1) + diphosphate. DNA-dependent RNA polymerase catalyzes the transcription of DNA into RNA using the four ribonucleoside triphosphates as substrates. This Phaeodactylum tricornutum (strain CCAP 1055/1) protein is DNA-directed RNA polymerase subunit beta'.